A 450-amino-acid polypeptide reads, in one-letter code: NADP-specific glutamate dehydrogenase (450 aa).

The active site involves K111.

It belongs to the Glu/Leu/Phe/Val dehydrogenases family. Homohexamer.

The catalysed reaction is L-glutamate + NADP(+) + H2O = 2-oxoglutarate + NH4(+) + NADPH + H(+). The chain is NADP-specific glutamate dehydrogenase from Hebeloma cylindrosporum.